The chain runs to 473 residues: ATP synthase subunit beta (473 aa).

156–163 (GGAGVGKT) provides a ligand contact to ATP.

This sequence belongs to the ATPase alpha/beta chains family. F-type ATPases have 2 components, CF(1) - the catalytic core - and CF(0) - the membrane proton channel. CF(1) has five subunits: alpha(3), beta(3), gamma(1), delta(1), epsilon(1). CF(0) has three main subunits: a(1), b(2) and c(9-12). The alpha and beta chains form an alternating ring which encloses part of the gamma chain. CF(1) is attached to CF(0) by a central stalk formed by the gamma and epsilon chains, while a peripheral stalk is formed by the delta and b chains.

The protein resides in the cell inner membrane. The enzyme catalyses ATP + H2O + 4 H(+)(in) = ADP + phosphate + 5 H(+)(out). Functionally, produces ATP from ADP in the presence of a proton gradient across the membrane. The catalytic sites are hosted primarily by the beta subunits. The sequence is that of ATP synthase subunit beta from Desulfovibrio desulfuricans (strain ATCC 27774 / DSM 6949 / MB).